A 425-amino-acid polypeptide reads, in one-letter code: UDP-N-acetylglucosamine 1-carboxyvinyltransferase (425 aa).

23–24 (KN) contacts phosphoenolpyruvate. Residue arginine 100 coordinates UDP-N-acetyl-alpha-D-glucosamine. Residue cysteine 124 is the Proton donor of the active site. The residue at position 124 (cysteine 124) is a 2-(S-cysteinyl)pyruvic acid O-phosphothioketal. UDP-N-acetyl-alpha-D-glucosamine is bound by residues aspartate 313 and isoleucine 335.

The protein belongs to the EPSP synthase family. MurA subfamily.

It localises to the cytoplasm. The enzyme catalyses phosphoenolpyruvate + UDP-N-acetyl-alpha-D-glucosamine = UDP-N-acetyl-3-O-(1-carboxyvinyl)-alpha-D-glucosamine + phosphate. It participates in cell wall biogenesis; peptidoglycan biosynthesis. Functionally, cell wall formation. Adds enolpyruvyl to UDP-N-acetylglucosamine. The sequence is that of UDP-N-acetylglucosamine 1-carboxyvinyltransferase from Wolbachia sp. subsp. Drosophila simulans (strain wRi).